Consider the following 56-residue polypeptide: Large ribosomal subunit protein bL32 (56 aa).

Residues 1 to 38 (MAVQQNKKSRSKRGMRRSHDSLSTAQLSVDATSGELHR) form a disordered region. A compositionally biased stretch (basic residues) spans 7 to 16 (KKSRSKRGMR). The segment covering 21–31 (SLSTAQLSVDA) has biased composition (polar residues).

It belongs to the bacterial ribosomal protein bL32 family.

This is Large ribosomal subunit protein bL32 from Shewanella woodyi (strain ATCC 51908 / MS32).